We begin with the raw amino-acid sequence, 339 residues long: 4-amino-5-hydroxymethyl-2-methylpyrimidine phosphate synthase (339 aa).

Residue Lys62 is modified to N6-(pyridoxal phosphate)lysine. Residue His66 is part of the active site. Pyridoxal 5'-phosphate is bound at residue Gly115–Gly118. Positions Cys195–Cys199 match the CCCFC; essential for catalytic activity, may be the site of iron coordination motif.

It belongs to the NMT1/THI5 family. Homodimer. Fe(3+) serves as cofactor.

The catalysed reaction is N(6)-(pyridoxal phosphate)-L-lysyl-[4-amino-5-hydroxymethyl-2-methylpyrimidine phosphate synthase] + L-histidyl-[4-amino-5-hydroxymethyl-2-methylpyrimidine phosphate synthase] + 2 Fe(3+) + 4 H2O = L-lysyl-[4-amino-5-hydroxymethyl-2-methylpyrimidine phosphate synthase] + (2S)-2-amino-5-hydroxy-4-oxopentanoyl-[4-amino-5-hydroxymethyl-2-methylpyrimidine phosphate synthase] + 4-amino-2-methyl-5-(phosphooxymethyl)pyrimidine + 3-oxopropanoate + 2 Fe(2+) + 2 H(+). It functions in the pathway cofactor biosynthesis; thiamine diphosphate biosynthesis. In terms of biological role, responsible for the formation of the pyrimidine heterocycle in the thiamine biosynthesis pathway. Catalyzes the formation of hydroxymethylpyrimidine phosphate (HMP-P) from histidine and pyridoxal phosphate (PLP). The protein uses PLP and the active site histidine to form HMP-P, generating an inactive enzyme. The enzyme can only undergo a single turnover, which suggests it is a suicide enzyme. The sequence is that of 4-amino-5-hydroxymethyl-2-methylpyrimidine phosphate synthase from Candida albicans (strain WO-1) (Yeast).